Here is a 388-residue protein sequence, read N- to C-terminus: Pepsin A-1 (388 aa).

Residues 1–15 (MKWLLLLGLVALSEC) form the signal peptide. 2 propeptides (activation peptide) span residues 16 to 40 (IIYK…LLKD) and 41 to 62 (FLKK…APTL). Positions 76–385 (YFGTIGIGTP…DRANNQVGLA (310 aa)) constitute a Peptidase A1 domain. Asp-94 is a catalytic residue. A disulfide bond links Cys-107 and Cys-112. The residue at position 130 (Ser-130) is a Phosphoserine. Cys-268 and Cys-272 are disulfide-bonded. Asp-277 is a catalytic residue. Residues Cys-311 and Cys-344 are joined by a disulfide bond.

This sequence belongs to the peptidase A1 family. In terms of processing, each pepsinogen is converted to corresponding pepsin at pH 2.0 in part as a result of the release of a 47 AA activation segment and in part as a result of stepwise proteolytic cleavage via an intermediate form(s).

The protein resides in the secreted. It catalyses the reaction Preferential cleavage: hydrophobic, preferably aromatic, residues in P1 and P1' positions. Cleaves 1-Phe-|-Val-2, 4-Gln-|-His-5, 13-Glu-|-Ala-14, 14-Ala-|-Leu-15, 15-Leu-|-Tyr-16, 16-Tyr-|-Leu-17, 23-Gly-|-Phe-24, 24-Phe-|-Phe-25 and 25-Phe-|-Tyr-26 bonds in the B chain of insulin.. Functionally, shows particularly broad specificity; although bonds involving phenylalanine and leucine are preferred, many others are also cleaved to some extent. The chain is Pepsin A-1 (PGA) from Macaca fuscata fuscata (Japanese macaque).